The primary structure comprises 792 residues: MNKKVYKTLEYNKILTMLSSYAACDETKKRCLSLEPITDLYEIRHLQTTTADALSRLYKDSGVSFVGIHNVHASLKRLDIGGALNTTELLRICSLLEVAKRVKAYGRSAMDNEKQDSLSGLFAGIEPVSALCDEIKRCILSEEEIADDASPELFKIRKSIRGMNDRIHAQLTKLMNNSTTRTYLQDAVVTMRDGRYCLPVKAEAKGNVPGMMHDQSSTGSTLFIEPMAVVNLNNELKELFIKEQEEIEKILAALSDKVAMNAAALEQDYEILSELDFIFAKANLAKSYNGVAPDFNTDGHINIRKGRHPLLDAKKVVPIDVRLGEDYKQLIITGPNTGGKTVSLKTVGLLTLMGQAGLHIPAADRSKLAIFEDVFADIGDEQSIEQSLSTFSSHMTNIVKILEKADDRSLCLFDELCSGTDPTEGAALAISILNRLHQYGAITMATTHYSELKVYALSTDGVENACCEFNVETLSPTYRLLIGIPGKSNAFAISSKLGLDENIIEDAKSRINDNDLDFEDLIASLESQRQTIEKEQLEINSYKAEIEKLKKQLEEKNERIDKSKDKILREANEEAYKILQDAKELADKTIRNFNKYGQGQAPMSQMEKERSALRDKMNDKEKKLSDIKKNTAKANHKAPKKLRIGDSVLVLSLNLKGTVHTLPNAKGDLYVQMGILRSLVNINDLVLLNDDVSPAKKYGGSGSKIKMSKSLSVSSEINLIGKTTDEALALLDKYLDDAYIAHLSSVRIVHGKGTGALRKAVHGLLKRTKTIAEYHLGEFGEGDAGVTIATFK.

334–341 (GPNTGGKT) is a binding site for ATP. In terms of domain architecture, Smr spans 717–792 (INLIGKTTDE…DAGVTIATFK (76 aa)).

It belongs to the DNA mismatch repair MutS family. MutS2 subfamily. In terms of assembly, homodimer. Binds to stalled ribosomes, contacting rRNA.

Functionally, endonuclease that is involved in the suppression of homologous recombination and thus may have a key role in the control of bacterial genetic diversity. In terms of biological role, acts as a ribosome collision sensor, splitting the ribosome into its 2 subunits. Detects stalled/collided 70S ribosomes which it binds and splits by an ATP-hydrolysis driven conformational change. Acts upstream of the ribosome quality control system (RQC), a ribosome-associated complex that mediates the extraction of incompletely synthesized nascent chains from stalled ribosomes and their subsequent degradation. Probably generates substrates for RQC. This is Endonuclease MutS2 from Agathobacter rectalis (strain ATCC 33656 / DSM 3377 / JCM 17463 / KCTC 5835 / VPI 0990) (Eubacterium rectale).